Reading from the N-terminus, the 229-residue chain is Deoxyribose-phosphate aldolase (229 aa).

The active-site Proton donor/acceptor is aspartate 84. Catalysis depends on lysine 146, which acts as the Schiff-base intermediate with acetaldehyde. The Proton donor/acceptor role is filled by lysine 188.

This sequence belongs to the DeoC/FbaB aldolase family. DeoC type 1 subfamily.

It localises to the cytoplasm. The catalysed reaction is 2-deoxy-D-ribose 5-phosphate = D-glyceraldehyde 3-phosphate + acetaldehyde. Its pathway is carbohydrate degradation; 2-deoxy-D-ribose 1-phosphate degradation; D-glyceraldehyde 3-phosphate and acetaldehyde from 2-deoxy-alpha-D-ribose 1-phosphate: step 2/2. Catalyzes a reversible aldol reaction between acetaldehyde and D-glyceraldehyde 3-phosphate to generate 2-deoxy-D-ribose 5-phosphate. The chain is Deoxyribose-phosphate aldolase from Pyrobaculum neutrophilum (strain DSM 2338 / JCM 9278 / NBRC 100436 / V24Sta) (Thermoproteus neutrophilus).